The following is a 106-amino-acid chain: ATP-dependent Clp protease adapter protein ClpS (106 aa).

It belongs to the ClpS family. As to quaternary structure, binds to the N-terminal domain of the chaperone ClpA.

In terms of biological role, involved in the modulation of the specificity of the ClpAP-mediated ATP-dependent protein degradation. The chain is ATP-dependent Clp protease adapter protein ClpS from Sodalis glossinidius (strain morsitans).